A 408-amino-acid polypeptide reads, in one-letter code: Aurora kinase A-B (408 aa).

A compositionally biased stretch (basic and acidic residues) spans 1-10 (MERAVKENHK). The segment at 1-128 (MERAVKENHK…QGKTLAVPKE (128 aa)) is disordered. The segment covering 85-110 (GHQTSKPQGPNENRNPQQTSHSSTPN) has biased composition (polar residues). The region spanning 140–390 (FEIGRPLGKG…LKGVLEHPWI (251 aa)) is the Protein kinase domain. Residues Lys-150, Lys-169, and 217–220 (LDYA) contribute to the ATP site. Residue Asp-263 is the Proton acceptor of the active site. Asp-281 serves as a coordination point for ATP. The segment at 287–300 (HAPSSRRTTLCGTL) is activation segment.

Belongs to the protein kinase superfamily. Ser/Thr protein kinase family. Aurora subfamily. As to quaternary structure, interacts with kif2c and kif11. Phosphorylated. Autophosphorylated on a serine residue.

The protein localises to the cytoplasm. Its subcellular location is the cytoskeleton. The protein resides in the spindle pole. It localises to the microtubule organizing center. It is found in the centrosome. It catalyses the reaction L-seryl-[protein] + ATP = O-phospho-L-seryl-[protein] + ADP + H(+). The catalysed reaction is L-threonyl-[protein] + ATP = O-phospho-L-threonyl-[protein] + ADP + H(+). In terms of biological role, mitotic serine/threonine kinases that contributes to the regulation of cell cycle progression. Associates with the centrosome and the spindle microtubules during mitosis and plays a critical role in various mitotic events including the establishment of mitotic spindle, centrosome duplication, centrosome separation as well as maturation, chromosomal alignment, spindle assembly checkpoint, and cytokinesis. Phosphorylates numerous target proteins. Important for microtubule formation and/or stabilization. The protein is Aurora kinase A-B (aurka-b) of Xenopus laevis (African clawed frog).